The chain runs to 646 residues: Phosphomethylpyrimidine synthase (646 aa).

Residues 1-13 (MNIRSNPDTTRPA) show a composition bias toward polar residues. The tract at residues 1-21 (MNIRSNPDTTRPAVTTGGLPS) is disordered. Residues N221, M250, Y279, H315, 335–337 (SRG), 376–379 (DGLR), and E415 each bind substrate. H419 contributes to the Zn(2+) binding site. Y442 contacts substrate. Residue H483 participates in Zn(2+) binding. C563, C566, and C571 together coordinate [4Fe-4S] cluster.

Belongs to the ThiC family. As to quaternary structure, homodimer. It depends on [4Fe-4S] cluster as a cofactor.

The enzyme catalyses 5-amino-1-(5-phospho-beta-D-ribosyl)imidazole + S-adenosyl-L-methionine = 4-amino-2-methyl-5-(phosphooxymethyl)pyrimidine + CO + 5'-deoxyadenosine + formate + L-methionine + 3 H(+). The protein operates within cofactor biosynthesis; thiamine diphosphate biosynthesis. Its function is as follows. Catalyzes the synthesis of the hydroxymethylpyrimidine phosphate (HMP-P) moiety of thiamine from aminoimidazole ribotide (AIR) in a radical S-adenosyl-L-methionine (SAM)-dependent reaction. This Rhodopseudomonas palustris (strain HaA2) protein is Phosphomethylpyrimidine synthase.